The sequence spans 171 residues: Sorcin (171 aa).

4 EF-hand domains span residues 3–38, 40–69, 70–105, and 106–140; these read MDTNSLRHIFSRVDADKSGSISANELQTSLSNGLGT, LNIRTVQLMVAMFDRDMNGTINFNEFLGLF, KYVQDWQTCFRRYDRDNSGSIDLNEFSNALISFGYH, and LSPQFVNLMMRRFDRNRGSIAFDDFIYACVCLQTL. Positions 16, 18, 20, 22, 27, 53, 55, 57, 59, 64, 83, 85, 87, 89, and 94 each coordinate Ca(2+).

It is found in the cytoplasm. Functionally, calcium-binding protein. The chain is Sorcin from Schistosoma japonicum (Blood fluke).